Here is a 358-residue protein sequence, read N- to C-terminus: Homoserine O-acetyltransferase (358 aa).

One can recognise an AB hydrolase-1 domain in the interval 52–337 (NVILICHALT…DEPYGHDAFL (286 aa)). S148 functions as the Nucleophile in the catalytic mechanism. R217 is a binding site for substrate. Catalysis depends on residues D304 and H333. D334 is a substrate binding site.

It belongs to the AB hydrolase superfamily. MetX family. In terms of assembly, homodimer.

It is found in the cytoplasm. The enzyme catalyses L-homoserine + acetyl-CoA = O-acetyl-L-homoserine + CoA. It functions in the pathway amino-acid biosynthesis; L-methionine biosynthesis via de novo pathway; O-acetyl-L-homoserine from L-homoserine: step 1/1. Functionally, transfers an acetyl group from acetyl-CoA to L-homoserine, forming acetyl-L-homoserine. The polypeptide is Homoserine O-acetyltransferase (Chlorobium luteolum (strain DSM 273 / BCRC 81028 / 2530) (Pelodictyon luteolum)).